The sequence spans 533 residues: Cytochrome P450 9e2 (533 aa).

Residue C475 participates in heme binding.

The protein belongs to the cytochrome P450 family. The cofactor is heme.

It is found in the endoplasmic reticulum membrane. The protein localises to the microsome membrane. The protein is Cytochrome P450 9e2 (CYP9E2) of Blattella germanica (German cockroach).